Consider the following 910-residue polypeptide: DNA mismatch repair protein MutS (910 aa).

The segment covering 1 to 11 (MEAKVEEKEPE) has biased composition (basic and acidic residues). Positions 1 to 21 (MEAKVEEKEPEPVENAGPDAP) are disordered. 658–665 (GPNMGGKS) contributes to the ATP binding site.

The protein belongs to the DNA mismatch repair MutS family.

Functionally, this protein is involved in the repair of mismatches in DNA. It is possible that it carries out the mismatch recognition step. This protein has a weak ATPase activity. In Brucella suis (strain ATCC 23445 / NCTC 10510), this protein is DNA mismatch repair protein MutS.